The sequence spans 344 residues: Arginine N-succinyltransferase (344 aa).

Leu125 is a succinyl-CoA binding site. Catalysis depends on His229, which acts as the Proton donor.

The protein belongs to the arginine N-succinyltransferase family.

It catalyses the reaction succinyl-CoA + L-arginine = N(2)-succinyl-L-arginine + CoA + H(+). It participates in amino-acid degradation; L-arginine degradation via AST pathway; L-glutamate and succinate from L-arginine: step 1/5. Catalyzes the transfer of succinyl-CoA to arginine to produce N(2)-succinylarginine. The chain is Arginine N-succinyltransferase from Shigella boydii serotype 4 (strain Sb227).